We begin with the raw amino-acid sequence, 518 residues long: Putative cytochrome P450 CYP13A7 (518 aa).

Cys464 serves as a coordination point for heme.

The protein belongs to the cytochrome P450 family. Heme is required as a cofactor.

Cytochromes P450 are a group of heme-thiolate monooxygenases. They oxidize a variety of structurally unrelated compounds, including steroids, fatty acids, and xenobiotics. This chain is Putative cytochrome P450 CYP13A7 (cyp-13A7), found in Caenorhabditis elegans.